Consider the following 344-residue polypeptide: MVTERQQDILNLIIDIFTKTHEPVGSKALQESINSSSATIRNDMAELEKQGLLEKAHTSSGRMPSVAGFQYYVKHSLDFDRLAENEVYEIVKAFDQEFFKLEDILQEAANLLTDLSGCTVVALDVEPSRQRLTAFDIVVLGQHTALAVFTLDESRTVTSQFLIPRNFLQEDLLKLKSIIQERFLGHTVLDIHYKIRTEIPQIIQRYFTTTDNVIDLFEHIFKEMFNENIVMAGKVHLLNFANLAAYQFFDQPQKVALEIREGLREEQMQNVRVADGQESCLADLAVISSKFLIPYRGVGILAIIGPVNLDYQQLINQVNVVNRVLTMKLTDFYRYLSSNHYEVH.

This sequence belongs to the HrcA family.

Negative regulator of class I heat shock genes (grpE-dnaK-dnaJ and groELS operons). Prevents heat-shock induction of these operons. The chain is Heat-inducible transcription repressor HrcA from Streptococcus pneumoniae (strain Taiwan19F-14).